Here is a 431-residue protein sequence, read N- to C-terminus: MKGFTGASIIVFYLIKGYLSYIIFPNGYVCDFKFNPLVNVLPSINTTGDIEEVGCTINNPSLSDYIALVCPKKNYNDYEHMEKVPSKCFSSNLYSPYKSEDSAHKLEELKIPEKYSISKDFSDFDLNIILIPSLYNIDKTIYCRCDNSKTKRELIKNDGENIKLQGKLGLVKIILNNQQNSPQNIYHITRSTQVGSLDNKVIELKEGEIVHLKYDGKTRTNFNCKEIINMKISIPLDYNLSMRMPTVFLKDINCKFHLIFSNVGGIANIVFKAKKTENIDGCDFTVPKGKGLYKNGFALSEINNDEEICTVHIGRGQNSNAAGLKCPYNLTPAHCFKHVLYEKKYKNGNNVFQTFLLDDVLRTVDIEYYYNAKLSAHIVGIPTIPEKSETVRCVCEHDGKKGIMELKISSSKNIFISFILLSIIVSIFYLF.

The signal sequence occupies residues 1–20; sequence MKGFTGASIIVFYLIKGYLS. The 153-residue stretch at 26 to 178 folds into the 6-Cys 1 domain; that stretch reads NGYVCDFKFN…GLVKIILNNQ (153 aa). 3 disulfide bridges follow: cysteine 30–cysteine 55, cysteine 70–cysteine 145, and cysteine 88–cysteine 143. Asparagine 45 is a glycosylation site (N-linked (GlcNAc...) asparagine). N-linked (GlcNAc...) asparagine glycosylation occurs at asparagine 239. The region spanning 278–413 is the 6-Cys 2 domain; that stretch reads NIDGCDFTVP…MELKISSSKN (136 aa). Disulfide bonds link cysteine 282/cysteine 309, cysteine 326/cysteine 395, and cysteine 335/cysteine 393. Serine 409 carries the GPI-anchor amidated serine lipid modification. Positions 410 to 431 are cleaved as a propeptide — removed in mature form; sequence SSKNIFISFILLSIIVSIFYLF.

The protein localises to the cell surface. It localises to the cell membrane. Required for female fertility. In Plasmodium berghei (strain Anka), this protein is Female gametocyte surface protein P47 (PB47).